We begin with the raw amino-acid sequence, 452 residues long: Glycine receptor subunit alpha-2 (452 aa).

The first 27 residues, 1 to 27 (MNRQLVNILTALFAFFLGTNHFREAFC), serve as a signal peptide directing secretion. The Extracellular portion of the chain corresponds to 28 to 256 (KDHDSRSGKH…KFHLERQMGY (229 aa)). An N-linked (GlcNAc...) asparagine glycan is attached at N72. R99 provides a ligand contact to glycine. Strychnine is bound at residue R99. N-linked (GlcNAc...) asparagine glycosylation occurs at N103. A glycine-binding site is contributed by S163. C172 and C186 form a disulfide bridge. Zn(2+) contacts are provided by E226 and E228. An intrachain disulfide couples C232 to C243. T238 contributes to the glycine binding site. H249 serves as a coordination point for Zn(2+). The chain crosses the membrane as a helical span at residues 257–278 (YLIQMYIPSLLIVILSWVSFWI). Residues 279 to 283 (NMDAA) are Cytoplasmic-facing. Residues 284–304 (PARVALGITTVLTMTTQSSGS) form a helical membrane-spanning segment. Residues 305-315 (RASLPKVSYVK) are Extracellular-facing. The chain crosses the membrane as a helical span at residues 316–336 (AIDIWMAVCLLFVFAALLEYA). Residues 337-420 (AVNFVSRQHK…FVDRAKRIDT (84 aa)) lie on the Cytoplasmic side of the membrane. A helical transmembrane segment spans residues 421–441 (ISRAAFPLAFLIFNIFYWITY). Topologically, residues 442–452 (KIIRHEDVHKK) are extracellular.

Belongs to the ligand-gated ion channel (TC 1.A.9) family. Glycine receptor (TC 1.A.9.3) subfamily. GLRA2 sub-subfamily. In terms of assembly, interacts with GLRB. Heteropentamer composed of GLRA2 and GLRB; functional GLRB-GLRA2 heteropentamers contain four GLRA2 subunits and one GLRB subunit, although alternative subunit composition cannot be excluded. Homopentamer (in vitro). Both homopentamers and heteropentamers form functional ion channels, but their characteristics are subtly different.

Its subcellular location is the postsynaptic cell membrane. It localises to the synapse. The protein resides in the cell membrane. It is found in the cell projection. The catalysed reaction is chloride(in) = chloride(out). Its activity is regulated as follows. Channel opening is triggered by extracellular glycine. Channel opening is also triggered by taurine and beta-alanine. Inhibited by strychnine. Inhibited by picrotoxin. Functionally, subunit of heteromeric glycine-gated chloride channels. Plays a role in synaptic plasticity. Contributes to the generation of inhibitory postsynaptic currents, and is involved in the down-regulation of neuronal excitability. Plays a role in cellular responses to ethanol. The protein is Glycine receptor subunit alpha-2 of Rattus norvegicus (Rat).